Reading from the N-terminus, the 520-residue chain is 4-hydroxyphenylacetate 3-monooxygenase oxygenase component (520 aa).

The protein belongs to the FADH(2)-utilizing monooxygenase family. As to quaternary structure, 4-HPA 3-monooxygenase consists of a reductase component HpaC and an oxygenase component HpaB.

The catalysed reaction is 4-hydroxyphenylacetate + FADH2 + O2 = 3,4-dihydroxyphenylacetate + FAD + H2O + H(+). It participates in aromatic compound metabolism; 4-hydroxyphenylacetate degradation; pyruvate and succinate semialdehyde from 4-hydroxyphenylacetate: step 1/7. Its function is as follows. Utilizes FADH(2) supplied by HpaC or by another flavin reductase, to catalyze the hydroxylation of 4-hydroxyphenylacetic acid, leading to the production of 3,4-DHPA. Can also oxidize phenol to catechol, and hydroxylate other phenol derivatives. The sequence is that of 4-hydroxyphenylacetate 3-monooxygenase oxygenase component (hpaB) from Escherichia coli.